The primary structure comprises 588 residues: MVRNKSACVVLLFSLFLSFGLLCSAKDFPGRRGDDDPPKRYEDCRRRCEWDTRGQKEQQQCEESCKSQYGEKDQQQRHRPEDPQRRYEECQQECRQQEERQRPQCQQRCLKRFEQEQQQSQRQFQECQQHCHQQEQRPERKQQCVRECRERYQENPWRREREEEAEEEETEEGEQEQSHNPFHFHRRSFQSRFREEHGNFRVLQRFASRHPILRGINEFRLSILEANPNTFVLPHHCDAEKIYLVTNGRGTLTFLTHENKESYNVVPGVVVRVPAGSTVYLANQDNKEKLIIAVLHRPVNNPRQFEEFFPAGSQRPQSYLRAFSREILEPAFNTRSEQLDELFGGRQSHRRQQGQGMFRKASQEQIRALSQEATSPREKSGERFAFNLLYRTPRYSNQNGRFYEACPREFRQLSDINVTVSALQLNQGSIFVPHYNSKATFVVLVNEGNGYVEMVSPHLPRQSSFEEEEEQQQEQEQEEERRSGQYRKIRSQLSRGDIFVVPANFPVTFVASQNQNLRMTGFGLYNQNINPDHNQRIFVAGKINHVRQWDSQAKELAFGVSSRLVDEIFNNNPQESYFVSRQRQRASE.

An N-terminal signal peptide occupies residues 1–25 (MVRNKSACVVLLFSLFLSFGLLCSA). 2 disordered regions span residues 159 to 183 (RERE…NPFH) and 460 to 487 (PRQS…GQYR). Over residues 163–175 (EEAEEEETEEGEQ) the composition is skewed to acidic residues. 2 consecutive Cupin type-1 domains span residues 182-340 (FHFH…EQLD) and 386-566 (FNLL…RLVD). A compositionally biased stretch (acidic residues) spans 465–478 (FEEEEEQQQEQEQE).

It belongs to the 7S seed storage protein family.

Its subcellular location is the vacuole. The protein localises to the aleurone grain. Its function is as follows. Seed storage protein. The polypeptide is Vicilin C72 (Gossypium hirsutum (Upland cotton)).